Reading from the N-terminus, the 209-residue chain is ATP-dependent Clp protease proteolytic subunit 2 (209 aa).

Ser-106 functions as the Nucleophile in the catalytic mechanism. The active site involves His-131.

This sequence belongs to the peptidase S14 family. Fourteen ClpP subunits assemble into 2 heptameric rings which stack back to back to give a disk-like structure with a central cavity, resembling the structure of eukaryotic proteasomes.

It localises to the cytoplasm. It carries out the reaction Hydrolysis of proteins to small peptides in the presence of ATP and magnesium. alpha-casein is the usual test substrate. In the absence of ATP, only oligopeptides shorter than five residues are hydrolyzed (such as succinyl-Leu-Tyr-|-NHMec, and Leu-Tyr-Leu-|-Tyr-Trp, in which cleavage of the -Tyr-|-Leu- and -Tyr-|-Trp bonds also occurs).. In terms of biological role, cleaves peptides in various proteins in a process that requires ATP hydrolysis. Has a chymotrypsin-like activity. Plays a major role in the degradation of misfolded proteins. The chain is ATP-dependent Clp protease proteolytic subunit 2 from Rhizobium etli (strain ATCC 51251 / DSM 11541 / JCM 21823 / NBRC 15573 / CFN 42).